Consider the following 173-residue polypeptide: GTP-dependent dephospho-CoA kinase (173 aa).

GTP contacts are provided by aspartate 52, valine 53, valine 54, aspartate 71, lysine 73, and aspartate 122.

Belongs to the GTP-dependent DPCK family.

It catalyses the reaction 3'-dephospho-CoA + GTP = GDP + CoA + H(+). It participates in cofactor biosynthesis; coenzyme A biosynthesis. Its function is as follows. Catalyzes the GTP-dependent phosphorylation of the 3'-hydroxyl group of dephosphocoenzyme A to form coenzyme A (CoA). The sequence is that of GTP-dependent dephospho-CoA kinase from Metallosphaera sedula (strain ATCC 51363 / DSM 5348 / JCM 9185 / NBRC 15509 / TH2).